Consider the following 258-residue polypeptide: Imidazole glycerol phosphate synthase subunit HisF (258 aa).

Active-site residues include Asp12 and Asp131.

This sequence belongs to the HisA/HisF family. In terms of assembly, heterodimer of HisH and HisF.

Its subcellular location is the cytoplasm. It carries out the reaction 5-[(5-phospho-1-deoxy-D-ribulos-1-ylimino)methylamino]-1-(5-phospho-beta-D-ribosyl)imidazole-4-carboxamide + L-glutamine = D-erythro-1-(imidazol-4-yl)glycerol 3-phosphate + 5-amino-1-(5-phospho-beta-D-ribosyl)imidazole-4-carboxamide + L-glutamate + H(+). It functions in the pathway amino-acid biosynthesis; L-histidine biosynthesis; L-histidine from 5-phospho-alpha-D-ribose 1-diphosphate: step 5/9. Its function is as follows. IGPS catalyzes the conversion of PRFAR and glutamine to IGP, AICAR and glutamate. The HisF subunit catalyzes the cyclization activity that produces IGP and AICAR from PRFAR using the ammonia provided by the HisH subunit. In Arthrobacter sp. (strain FB24), this protein is Imidazole glycerol phosphate synthase subunit HisF.